The chain runs to 221 residues: MGTLVAKLLLPTLSSLAFLPTVSIAAKRRFHMEAMVYLFTLFFVALHHACNGPGLSVLCFMRHDILEYFSVYGTALSMWVSLMALADFDEPKRSTFVMFGVLTIAVRIYHDRWGYGVYSGPIGTAILIIAAKWLQKMKEKKGLYPDKSVYTQQIGPGLCFGALALMLRFFFEDWDYTYVHSFYHCALAMSFVLLLPKVNKKAGSPGTPAKLDCSTLCCACV.

At 1 to 3 (MGT) the chain is on the extracellular side. The helical transmembrane segment at 4 to 24 (LVAKLLLPTLSSLAFLPTVSI) threads the bilayer. At 25–34 (AAKRRFHMEA) the chain is on the cytoplasmic side. The chain crosses the membrane as a helical span at residues 35-55 (MVYLFTLFFVALHHACNGPGL). The Extracellular portion of the chain corresponds to 56–64 (SVLCFMRHD). Residues 65-85 (ILEYFSVYGTALSMWVSLMAL) traverse the membrane as a helical segment. Topologically, residues 86–92 (ADFDEPK) are cytoplasmic. The chain crosses the membrane as a helical span at residues 93–110 (RSTFVMFGVLTIAVRIYH). Residues 111–113 (DRW) are Extracellular-facing. The helical transmembrane segment at 114-134 (GYGVYSGPIGTAILIIAAKWL) threads the bilayer. Residues 135–153 (QKMKEKKGLYPDKSVYTQQ) lie on the Cytoplasmic side of the membrane. The chain crosses the membrane as a helical span at residues 154 to 174 (IGPGLCFGALALMLRFFFEDW). Asp-175 is a topological domain (extracellular). The chain crosses the membrane as a helical span at residues 176 to 196 (YTYVHSFYHCALAMSFVLLLP). Over 197 to 221 (KVNKKAGSPGTPAKLDCSTLCCACV) the chain is Cytoplasmic. S-palmitoyl cysteine attachment occurs at residues Cys-217 and Cys-218.

Belongs to the TMEM8 family. Interacts with MYMX. Post-translationally, palmitoylated at the C-terminus; palmitoylation promotes localization to the Golgi apparatus.

Its subcellular location is the cell membrane. The protein resides in the golgi apparatus membrane. In terms of biological role, myoblast-specific protein that mediates myoblast fusion, an essential step for the formation of multi-nucleated muscle fibers. Actively participates in the membrane fusion reaction by mediating the mixing of cell membrane lipids (hemifusion) upstream of MYMX. Acts independently of MYMX. Involved in skeletal muscle regeneration in response to injury by mediating the fusion of satellite cells, a population of muscle stem cells, with injured myofibers. Also involved in skeletal muscle hypertrophy, probably by mediating the fusion of satellite cells with myofibers. The chain is Protein myomaker from Homo sapiens (Human).